Consider the following 786-residue polypeptide: von Willebrand factor A domain-containing protein 5A (786 aa).

A VIT domain is found at 1-131; it reads MVHFCGLLTL…KAAVTLKYVQ (131 aa). The 182-residue stretch at 281–462 folds into the VWFA domain; that stretch reads EFIFLMDRSG…KALRTLKRSL (182 aa).

Expressed at low level in many tissues. Not expressed in 80% of tumor cell lines tested.

Functionally, may play a role in tumorigenesis as a tumor suppressor. Altered expression of this protein and disruption of the molecular pathway it is involved in, may contribute directly to or modify tumorigenesis. In Homo sapiens (Human), this protein is von Willebrand factor A domain-containing protein 5A (VWA5A).